Here is a 457-residue protein sequence, read N- to C-terminus: Acetate--CoA ligase [ADP-forming] II subunit alpha (457 aa).

It belongs to the acetate CoA ligase alpha subunit family. In terms of assembly, heterotetramer of two alpha and two beta subunits.

The catalysed reaction is acetate + ATP + CoA = acetyl-CoA + ADP + phosphate. Its function is as follows. Catalyzes the reversible formation of acetate and ATP from acetyl-CoA by using ADP and phosphate. Can use other substrates such as phenylacetyl-CoA, indoleacetyl-CoA and isobutyryl-CoA, but not succinyl-CoA. Seems to be involved primarily in the degradation of aryl-CoA esters to the corresponding acids. Participates in the conversion of acetyl-CoA to acetate and in the degradation of branched-chain amino acids via branched-chain-acyl-CoA esters. This is Acetate--CoA ligase [ADP-forming] II subunit alpha from Pyrococcus furiosus (strain ATCC 43587 / DSM 3638 / JCM 8422 / Vc1).